The primary structure comprises 486 residues: Patatin-like phospholipase domain-containing protein 2 (486 aa).

Residues 1-8 (MFPKETTW) are Cytoplasmic-facing. Residues 9-29 (NISFAGCGFLGVYHIGVASCL) form a helical membrane-spanning segment. The region spanning 10-179 (ISFAGCGFLG…SDNLPLYELK (170 aa)) is the PNPLA domain. The short motif at 14–19 (GCGFLG) is the GXGXXG element. Over 30 to 42 (REHAPFLVANATH) the chain is Extracellular. An N-linked (GlcNAc...) asparagine glycan is attached at N39. A helical membrane pass occupies residues 43–63 (IYGASAGALTATALVTGACLG). The GXSXG motif lies at 45–49 (GASAG). The Nucleophile role is filled by S47. Residues 64-137 (EAGANIIEVS…IITHFNSKEE (74 aa)) lie on the Cytoplasmic side of the membrane. A Glycyl lysine isopeptide (Lys-Gly) (interchain with G-Cter in ubiquitin) cross-link involves residue K92. The helical transmembrane segment at 138-158 (LIQANVCSTFIPVYCGLIPPS) threads the bilayer. At 159–334 (LQGVRYVDGG…TTLSNMLPVR (176 aa)) the chain is on the extracellular side. D166 acts as the Proton acceptor in catalysis. Residues 166–168 (DGG) carry the DGA/G motif. Residues 335–355 (LAMAMMVPYTLPLESAVSFTI) traverse the membrane as a helical segment. At 356 to 486 (RLLEWLPDVP…PQHPPSSPPC (131 aa)) the chain is on the cytoplasmic side. S377 is modified (phosphoserine; in vitro). 2 positions are modified to phosphoserine; by PKA: S399 and S409. The residue at position 433 (S433) is a Phosphoserine; in vitro.

Interacts with ABHD5; this association stimulates PNPLA2 triglyceride hydrolase activity. Interacts with SERPINF1; this interaction stimulates the phospholipase A2 activity of PNPLA2. Despite a colocalization in lipid droplets, it probably does not interact with PLIN. Interacts with PLIN5; prevents interaction with ABHD5. Interacts with FAF2. Post-translationally, phosphorylation at Ser-409 by PKA is increased during fasting and moderate intensity exercise, and moderately increases lipolytic activity. Ubiquitinated by PEX2 in response to reactive oxygen species (ROS), leading to its degradation. Ubiquitination is stimulated by LDAH.

The protein localises to the lipid droplet. It is found in the cell membrane. Its subcellular location is the cytoplasm. It catalyses the reaction a triacylglycerol + H2O = a diacylglycerol + a fatty acid + H(+). The enzyme catalyses a triacylglycerol + H2O = a 1,2-diacylglycerol + a fatty acid + H(+). The catalysed reaction is a triacylglycerol + H2O = a 1,3-diacylglycerol + a fatty acid + H(+). It carries out the reaction a triacyl-sn-glycerol + H2O = a 1,3-diacyl-sn-glycerol + a fatty acid + H(+). It catalyses the reaction a triacyl-sn-glycerol + H2O = a 2,3-diacyl-sn-glycerol + a fatty acid + H(+). The enzyme catalyses a 1-acylglycerol + a 1,3-diacylglycerol = a triacylglycerol + glycerol. The catalysed reaction is a 1-acylglycerol + a 1,2-diacylglycerol = a triacylglycerol + glycerol. It carries out the reaction 2 a 1-acylglycerol = a 1,2-diacylglycerol + glycerol. It catalyses the reaction a triacylglycerol + all-trans-retinol = an all-trans-retinyl ester + a diacylglycerol. The enzyme catalyses 1,2-di-(9Z-octadecenoyl)-glycerol + (9Z)-octadecenoate + H(+) = 1,2,3-tri-(9Z-octadecenoyl)-glycerol + H2O. The catalysed reaction is 1,2,3-tri-(9Z-octadecenoyl)-glycerol + H2O = 1,3-di-(9Z-octadecenoyl)-glycerol + (9Z)-octadecenoate + H(+). It carries out the reaction 1-(9Z-octadecenoyl)-glycerol + 1,3-di-(9Z-octadecenoyl)-glycerol = 1,2,3-tri-(9Z-octadecenoyl)-glycerol + glycerol. It catalyses the reaction 1-(9Z-octadecenoyl)-glycerol + 1,2-di-(9Z-octadecenoyl)-glycerol = 1,2,3-tri-(9Z-octadecenoyl)-glycerol + glycerol. The enzyme catalyses 2 1-(9Z-octadecenoyl)-glycerol = 1,2-di-(9Z-octadecenoyl)-glycerol + glycerol. The catalysed reaction is 1,2,3-tri-(9Z-octadecenoyl)-glycerol + all-trans-retinol = all-trans-retinyl 9Z-octadecenoate + di-(9Z)-octadecenoylglycerol. It carries out the reaction 1,2,3-tri-(9Z)-hexadecenoylglycerol + H2O = 1,3-di-(9Z)-hexadecenoylglycerol + (9Z)-hexadecenoate + H(+). It catalyses the reaction 1,2,3-tri-(9Z,12Z)-octadecadienoylglycerol + H2O = 1,3-di-(9Z,12Z)-octadecadienoylglycerol + (9Z,12Z)-octadecadienoate + H(+). The enzyme catalyses 1,2,3-tri-(9Z,12Z,15Z)-octadecatrienoylglycerol + H2O = 1,3-di-(9Z,12Z,15Z)-octadecatrienoylglycerol + (9Z,12Z,15Z)-octadecatrienoate + H(+). The catalysed reaction is 1,3-di-(9Z)-octadecenoyl-2-hexadecanoylglycerol + H2O = 1,3-di-(9Z-octadecenoyl)-glycerol + hexadecanoate + H(+). It carries out the reaction 1,2-di-(9Z)-octadecenoyl-3-hexadecanoyl-sn-glycerol + H2O = 1-(9Z)-octadecenoyl-3-hexadecanoyl-sn-glycerol + (9Z)-octadecenoate + H(+). It catalyses the reaction 1-hexadecanoyl-2,3-di-(9Z)-octadecenoyl-sn-glycerol + H2O = 1-hexadecanoyl-3-(9Z)-octadecenoyl-sn-glycerol + (9Z)-octadecenoate + H(+). The enzyme catalyses 1,2,3-tri-(9Z-octadecenoyl)-glycerol + H2O = 2,3-di-(9Z)-octadecenoyl-sn-glycerol + (9Z)-octadecenoate + H(+). The catalysed reaction is 1,2,3-tri-(9Z)-hexadecenoylglycerol + H2O = 2,3-di-(9Z)-hexadecenoyl-sn-glycerol + (9Z)-hexadecenoate + H(+). It carries out the reaction 1,2,3-tri-(9Z,12Z)-octadecadienoylglycerol + H2O = 2,3-di-(9Z,12Z)-octadecadienoyl-sn-glycerol + (9Z,12Z)-octadecadienoate + H(+). It catalyses the reaction 1,2,3-tri-(9Z,12Z,15Z)-octadecatrienoylglycerol + H2O = 2,3-di-(9Z,12Z,15Z)-octadecatrienoyl-sn-glycerol + (9Z,12Z,15Z)-octadecatrienoate + H(+). The enzyme catalyses 1,3-di-(9Z)-octadecenoyl-2-hexadecanoylglycerol + H2O = 2-hexadecanoyl-3-(9Z)-octadecenoyl-sn-glycerol + (9Z)-octadecenoate + H(+). The catalysed reaction is 1-hexadecanoyl-2,3-di-(9Z)-octadecenoyl-sn-glycerol + H2O = 2,3-di-(9Z)-octadecenoyl-sn-glycerol + hexadecanoate + H(+). It carries out the reaction 1,2-di-(9Z)-octadecenoyl-3-hexadecanoyl-sn-glycerol + H2O = 2-(9Z-octadecenoyl)-3-hexadecanoyl-sn-glycerol + (9Z)-octadecenoate + H(+). It catalyses the reaction a 1,2-diacyl-sn-glycero-3-phosphocholine + H2O = a 1-acyl-sn-glycero-3-phosphocholine + a fatty acid + H(+). The enzyme catalyses 1,2,3-tri-(9Z-octadecenoyl)-glycerol + 9-hydroxy-octadecanoate = 9-(9Z-octadecenoyloxy)-octadecanoate + 2,3-di-(9Z)-octadecenoyl-sn-glycerol. The catalysed reaction is 1-hexadecanoyl-2,3-di-(9Z)-octadecenoyl-sn-glycerol + 9-hydroxy-octadecanoate = 9-hexadecanoyloxy-octadecanoate + 2,3-di-(9Z)-octadecenoyl-sn-glycerol. It carries out the reaction 1,2,3-tri-(10Z)-heptadecenoylglycerol + 9-hydroxy-octadecanoate = 2,3-di-(10Z-heptadecenoyl)-sn-glycerol + 9-(10Z-heptadecenoyloxy)-octadecanoate. It catalyses the reaction 1,2,3-tri-(9Z,12Z)-octadecadienoylglycerol + 9-hydroxy-octadecanoate = 2,3-di-(9Z,12Z)-octadecadienoyl-sn-glycerol + 9-(9Z,12Z-octadecadienoyloxy)-octadecanoate. The enzyme catalyses 1,2,3-tri-(9Z)-hexadecenoylglycerol + 9-hydroxy-octadecanoate = 2,3-di-(9Z)-hexadecenoyl-sn-glycerol + 9-(9Z-hexadecenoyloxy)-octadecanoate. The catalysed reaction is 9-hydroxy-octadecanoate + 1,2-di-(9Z-octadecenoyl)-sn-glycerol = 9-(9Z-octadecenoyloxy)-octadecanoate + 2-(9Z-octadecenoyl)-glycerol. It carries out the reaction 1-hexadecanoyl-2,3-di-(9Z)-octadecenoyl-sn-glycerol + 9-hydroxy-octadecanoate = 1-hexadecanoyl-3-(9Z)-octadecenoyl-sn-glycerol + 9-(9Z-octadecenoyloxy)-octadecanoate. Its pathway is glycerolipid metabolism; triacylglycerol degradation. In terms of biological role, catalyzes the initial step in triglyceride hydrolysis in adipocyte and non-adipocyte lipid droplets. Exhibits a strong preference for the hydrolysis of long-chain fatty acid esters at the sn-2 position of the glycerol backbone and acts coordinately with LIPE/HLS and DGAT2 within the lipolytic cascade. Also possesses acylglycerol transacylase and phospholipase A2 activities. Transfers fatty acid from triglyceride to retinol, hydrolyzes retinylesters, and generates 1,3-diacylglycerol from triglycerides. Regulates adiposome size and may be involved in the degradation of adiposomes. Catalyzes the formation of an ester bond between hydroxy fatty acids and fatty acids derived from triglycerides or diglycerides to generate fatty acid esters of hydroxy fatty acids (FAHFAs) in adipocytes. Acts antagonistically with LDAH in regulation of cellular lipid stores. Inhibits LDAH-stimulated lipid droplet fusion. May play an important role in energy homeostasis. May play a role in the response of the organism to starvation, enhancing hydrolysis of triglycerides and providing free fatty acids to other tissues to be oxidized in situations of energy depletion. This Bos taurus (Bovine) protein is Patatin-like phospholipase domain-containing protein 2 (PNPLA2).